Reading from the N-terminus, the 372-residue chain is Glutamate 5-kinase (372 aa).

K14 contributes to the ATP binding site. Substrate is bound by residues S54, D141, and N153. 173–174 (TD) lines the ATP pocket. One can recognise a PUA domain in the interval 280-358 (RGTLVLDDGA…DAIVGLLGYM (79 aa)).

It belongs to the glutamate 5-kinase family.

The protein localises to the cytoplasm. The catalysed reaction is L-glutamate + ATP = L-glutamyl 5-phosphate + ADP. The protein operates within amino-acid biosynthesis; L-proline biosynthesis; L-glutamate 5-semialdehyde from L-glutamate: step 1/2. In terms of biological role, catalyzes the transfer of a phosphate group to glutamate to form L-glutamate 5-phosphate. This chain is Glutamate 5-kinase, found in Pseudomonas fluorescens (strain Pf0-1).